Here is a 788-residue protein sequence, read N- to C-terminus: Cadherin-10 (788 aa).

Positions Met-1–Pro-22 are cleaved as a signal peptide. The propeptide occupies Glu-23 to Arg-54. The Extracellular portion of the chain corresponds to Glu-23–Ala-613. 5 Cadherin domains span residues Trp-56–Phe-160, Pro-161–Phe-269, Pro-270–Phe-384, Ser-385–Phe-489, and Phe-489–Leu-603. N-linked (GlcNAc...) asparagine glycosylation occurs at Asn-256. 2 N-linked (GlcNAc...) asparagine glycosylation sites follow: Asn-456 and Asn-534. The helical transmembrane segment at Leu-614–Leu-634 threads the bilayer. Topologically, residues Lys-635–Ala-788 are cytoplasmic. Ser-784 carries the phosphoserine modification.

It is found in the cell membrane. Functionally, cadherins are calcium-dependent cell adhesion proteins. They preferentially interact with themselves in a homophilic manner in connecting cells; cadherins may thus contribute to the sorting of heterogeneous cell types. The sequence is that of Cadherin-10 (Cdh10) from Mus musculus (Mouse).